The sequence spans 541 residues: Glutamyl-tRNA(Gln) amidotransferase subunit B, mitochondrial (541 aa).

The protein belongs to the GatB/GatE family. GatB subfamily. As to quaternary structure, subunit of the heterotrimeric GatFAB amidotransferase (AdT) complex, composed of A, B and F subunits.

Its subcellular location is the mitochondrion. It carries out the reaction L-glutamyl-tRNA(Gln) + L-glutamine + ATP + H2O = L-glutaminyl-tRNA(Gln) + L-glutamate + ADP + phosphate + H(+). In terms of biological role, allows the formation of correctly charged Gln-tRNA(Gln) through the transamidation of misacylated Glu-tRNA(Gln) in the mitochondria. The reaction takes place in the presence of glutamine and ATP through an activated gamma-phospho-Glu-tRNA(Gln). This Saccharomyces cerevisiae (strain RM11-1a) (Baker's yeast) protein is Glutamyl-tRNA(Gln) amidotransferase subunit B, mitochondrial.